A 387-amino-acid polypeptide reads, in one-letter code: Alkanesulfonate monooxygenase (387 aa).

It belongs to the SsuD family.

It carries out the reaction an alkanesulfonate + FMNH2 + O2 = an aldehyde + FMN + sulfite + H2O + 2 H(+). Its function is as follows. Catalyzes the desulfonation of aliphatic sulfonates. The polypeptide is Alkanesulfonate monooxygenase (Ralstonia nicotianae (strain ATCC BAA-1114 / GMI1000) (Ralstonia solanacearum)).